The chain runs to 257 residues: 3-methyl-2-oxobutanoate hydroxymethyltransferase (257 aa).

Mg(2+) is bound by residues Asp42 and Asp86. 3-methyl-2-oxobutanoate contacts are provided by residues 42-43 (DS), Asp86, and Lys116. Glu118 is a Mg(2+) binding site. Glu185 serves as the catalytic Proton acceptor.

It belongs to the PanB family. As to quaternary structure, homodecamer; pentamer of dimers. The cofactor is Mg(2+).

Its subcellular location is the cytoplasm. It catalyses the reaction 3-methyl-2-oxobutanoate + (6R)-5,10-methylene-5,6,7,8-tetrahydrofolate + H2O = 2-dehydropantoate + (6S)-5,6,7,8-tetrahydrofolate. The protein operates within cofactor biosynthesis; (R)-pantothenate biosynthesis; (R)-pantoate from 3-methyl-2-oxobutanoate: step 1/2. In terms of biological role, catalyzes the reversible reaction in which hydroxymethyl group from 5,10-methylenetetrahydrofolate is transferred onto alpha-ketoisovalerate to form ketopantoate. The protein is 3-methyl-2-oxobutanoate hydroxymethyltransferase of Prochlorococcus marinus (strain MIT 9215).